The following is a 1079-amino-acid chain: MSGRAVLSPQHAQASFDSGLQLYGDVPELNAVPPPSHSALMDFTRFDDFAFAYYGLPDQSSLVSLVDHTHTFQSLTTFPQHQAISGLAHSGLPFGTLPTDNYNQSMEDSKAPPDRTSPASNALEDPTTDEFGLASPNRAGGTDLGGKPKEDKADATPAWSELKTKAGKERKRLPLACIACRRKKIRCSGEKPACKQCLHSCIPCVYKVATRKAAPRTNCMAMLDKRPKRMEERAIKAISKSDQEVASSVTHPVVKQAIPGTVTSSRPTKKRGAEEAFEPDLEAWAKASSEPKIEGDDGSSSLQVQEGEENKLQHEGTEALPSREIQEHLAEVFFENIYGQSYHLLHKPSYMRKLKNGTLPPVLVLTVCAVAARFTSNPLVSSSGPEFLRGEEWASHARDICTRRYEWPNLTILTCLLILGLHEFGTCQGGRSWALGGQAIRMAFALQLHKDLEYDPSGRNGTTTQLSFIDREIRRRIMWACFLMDRFNSSGTDRPMFIREDTIQIPLPVKEKYFQFDMPAPTEMLDGRVPHPPSPNDGQIANSRENMGVAAFLIRAIALWGRIITYLSQGCKDLDPNPLWEDESHYMKHLDDVVNLEASLPLSLKHSAENLEVHKTENTASQFLFMHICLQHNILFVNRAAMSARKQHGVHDDFVSEASKRAFNAANRISELLREAEQSGCFVSAPFAGYCAFSSTTVHILGIISRNPFTKLAAQANLTTNIKYLHRMKKYWGMFHWMVENVRTQYRNVLDAMRAGANVEERATQPSFLQYGDWFNRYPRGLSDAEFMDPATHKRKDSGADGVLEAKRELRSVEEYFTLPTPRRVENKDTIRATAPKRKQSAKKQAGMPAQPGQHLDSLQSIDADAVSQERKFSGGLGLQITGAAGFNPLAASNQQSPDFSTTISPTRPANMTPFAHHAHTPTFFPPELLAMNFGQGSNGNIDPLDRQLIYGGYSMDASTGLGGGQDMMSGLGWDTVALGAQPDGRLQSRPSNAKAGMHGQSAGMADGAGLSRPEASSAWFMPFNMEPPDMDQDAGFNMGGIDPFTGVFGGGGSGLATPNALGGLILGHCRGSSTHSTR.

Residues 177-204 (CIACRRKKIRCSGEKPACKQCLHSCIPC) constitute a DNA-binding region (zn(2)-C6 fungal-type).

It is found in the nucleus. Its function is as follows. Zn(2)-C6 fungal-type transcription factor that has a role in the establishment of the fungus within the plant and/or the progress of the disease. Regulates the expression of virulence factors such as SIX1 and SIX6. This chain is Zn(2)-C6 fungal-type transcription factor FTF1a, found in Fusarium oxysporum f. sp. lycopersici (strain 4287 / CBS 123668 / FGSC 9935 / NRRL 34936) (Fusarium vascular wilt of tomato).